Reading from the N-terminus, the 218-residue chain is Small ribosomal subunit protein uS3 (218 aa).

The 69-residue stretch at 38 to 106 (LRNDLKKKLM…PVHLNIEEVK (69 aa)) folds into the KH type-2 domain.

Belongs to the universal ribosomal protein uS3 family. Part of the 30S ribosomal subunit. Forms a tight complex with proteins S10 and S14.

Functionally, binds the lower part of the 30S subunit head. Binds mRNA in the 70S ribosome, positioning it for translation. The protein is Small ribosomal subunit protein uS3 of Legionella pneumophila (strain Paris).